Here is a 593-residue protein sequence, read N- to C-terminus: Cyclin-dependent kinase-like 3 (593 aa).

One can recognise a Protein kinase domain in the interval Tyr4–Phe286. ATP contacts are provided by residues Val10–Val18 and Lys33. The [NKR]KIAxRE signature appears at Lys45–Ile51. Asp125 functions as the Proton acceptor in the catalytic mechanism. Thr158 carries the phosphothreonine modification. Residue Tyr160 is modified to Phosphotyrosine. Over residues Gly368–Ser403 the composition is skewed to basic and acidic residues. Residues Gly368–Arg512 are disordered. The segment covering Asn436–Ser452 has biased composition (low complexity). Composition is skewed to polar residues over residues Ser468–Thr491 and Arg499–Ser508.

It belongs to the protein kinase superfamily. CMGC Ser/Thr protein kinase family. CDC2/CDKX subfamily. As to expression, highly expressed in brain, and to a lower extent in heart and testis.

It is found in the nucleus. The protein localises to the cytoplasm. It catalyses the reaction L-seryl-[protein] + ATP = O-phospho-L-seryl-[protein] + ADP + H(+). It carries out the reaction L-threonyl-[protein] + ATP = O-phospho-L-threonyl-[protein] + ADP + H(+). The sequence is that of Cyclin-dependent kinase-like 3 from Rattus norvegicus (Rat).